The chain runs to 87 residues: Small ribosomal subunit protein bS16 (87 aa).

It belongs to the bacterial ribosomal protein bS16 family.

The protein is Small ribosomal subunit protein bS16 of Ehrlichia chaffeensis (strain ATCC CRL-10679 / Arkansas).